Consider the following 328-residue polypeptide: Aryl-hydrocarbon-interacting protein-like 1 (328 aa).

Residues 53–145 enclose the PPIase FKBP-type domain; the sequence is KQVGQPMNII…DLDELQKEPQ (93 aa). TPR repeat units follow at residues 178 to 211, 230 to 263, and 264 to 297; these read VPLL…LRNL, NTLI…HPGI, and VKAY…EPSM.

In terms of assembly, interacts with NUB1. In terms of tissue distribution, highly expressed in retina.

The protein localises to the cytoplasm. It localises to the nucleus. Functionally, may be important in protein trafficking and/or protein folding and stabilization. This Rattus norvegicus (Rat) protein is Aryl-hydrocarbon-interacting protein-like 1 (Aipl1).